The sequence spans 1350 residues: ABC-type transporter MDR1 (1350 aa).

Basic and acidic residues predominate over residues 1 to 11; sequence MDTVHEGHHGS. Positions 1–84 are disordered; sequence MDTVHEGHHG…DEGEDPFAHL (84 aa). Polar residues predominate over residues 22-33; it reads VEVTNYEKTQLG. A compositionally biased stretch (basic residues) spans 52-63; that stretch reads KKHKSQKEKKHK. One can recognise an ABC transmembrane type-1 1 domain in the interval 121-411; the sequence is VLSALSSIIG…VAPNIQAFTT (291 aa). The next 6 helical transmembrane spans lie at 124–144, 170–190, 243–263, 271–291, 350–370, and 380–400; these read ALSS…FGGL, LYFL…TAGF, KVGL…VSFI, ILMS…GFIV, GSMI…AFWM, and IEVG…FALG. An ABC transporter 1 domain is found at 446 to 691; sequence IELRNIRHIY…QGAYYNLVEA (246 aa). Position 481–488 (481–488) interacts with ATP; that stretch reads GESGSGKS. A compositionally biased stretch (basic and acidic residues) spans 712–731; that stretch reads KDQNLKHETTKGEQPEDGLK. Residues 712–734 are disordered; that stretch reads KDQNLKHETTKGEQPEDGLKLAR. 6 helical membrane passes run 779–799, 830–850, 903–923, 929–949, 1014–1034, and 1044–1064; these read IGII…VFFA, FMLA…FAVC, LGTI…SLAI, LVCI…FWML, ASQS…GTLI, and FFLC…IFSF. One can recognise an ABC transmembrane type-1 2 domain in the interval 779-1070; that stretch reads IGIICSVITG…IFSFAPDMGK (292 aa). Residues 1105 to 1343 enclose the ABC transporter 2 domain; that stretch reads IEFRDVHFRY…RGRYWELVNL (239 aa). N1127 is a glycosylation site (N-linked (GlcNAc...) asparagine). Residue 1140–1147 participates in ATP binding; the sequence is GASGCGKS.

It belongs to the ABC transporter superfamily. ABCB family. Multidrug resistance exporter (TC 3.A.1.201) subfamily.

The protein resides in the cell membrane. Its function is as follows. ABC-type transporter that is involved in the secretion of liamocins, glycolipids (also called heavy oils) composed of a single mannitol or arabitol headgroup linked to either three, four or even six 3,5-dihydroxydecanoic ester tail-groups. In Aureobasidium melanogenum (Aureobasidium pullulans var. melanogenum), this protein is ABC-type transporter MDR1.